Reading from the N-terminus, the 368-residue chain is uncharacterized protein (368 aa).

Disordered stretches follow at residues 1 to 22 (MEKS…LPEK) and 282 to 317 (KHLG…EPPA). Residues 293–311 (KRVEKMKKAYKESKEEKAS) are compositionally biased toward basic and acidic residues.

This is an uncharacterized protein from Mus musculus (Mouse).